We begin with the raw amino-acid sequence, 413 residues long: Multifunctional CCA protein (413 aa).

ATP-binding residues include G8 and R11. CTP is bound by residues G8 and R11. The Mg(2+) site is built by E21 and D23. Residues R91, R137, and R140 each coordinate ATP. Residues R91, R137, and R140 each coordinate CTP. Residues 228 to 329 enclose the HD domain; sequence TGEHTLLALA…LKLLEGLDLF (102 aa).

It belongs to the tRNA nucleotidyltransferase/poly(A) polymerase family. Bacterial CCA-adding enzyme type 1 subfamily. In terms of assembly, monomer. Can also form homodimers and oligomers. Requires Mg(2+) as cofactor. Ni(2+) serves as cofactor.

The enzyme catalyses a tRNA precursor + 2 CTP + ATP = a tRNA with a 3' CCA end + 3 diphosphate. The catalysed reaction is a tRNA with a 3' CCA end + 2 CTP + ATP = a tRNA with a 3' CCACCA end + 3 diphosphate. Functionally, catalyzes the addition and repair of the essential 3'-terminal CCA sequence in tRNAs without using a nucleic acid template. Adds these three nucleotides in the order of C, C, and A to the tRNA nucleotide-73, using CTP and ATP as substrates and producing inorganic pyrophosphate. tRNA 3'-terminal CCA addition is required both for tRNA processing and repair. Also involved in tRNA surveillance by mediating tandem CCA addition to generate a CCACCA at the 3' terminus of unstable tRNAs. While stable tRNAs receive only 3'-terminal CCA, unstable tRNAs are marked with CCACCA and rapidly degraded. The sequence is that of Multifunctional CCA protein from Alkalilimnicola ehrlichii (strain ATCC BAA-1101 / DSM 17681 / MLHE-1).